Here is a 53-residue protein sequence, read N- to C-terminus: Collagen alpha-1(I) chain (53 aa).

The interval 1–53 is disordered; the sequence is SYGYBZKSAGVSVPGPMGPSGPRGLPGPPGAPGPZGFZGPPGZPGZPGSSGPM. Position 7 is an allysine (lysine 7). The residue at position 8 (serine 8) is a Phosphoserine. Over residues 10–23 the composition is skewed to low complexity; sequence GVSVPGPMGPSGPR. Proline 26, proline 29, proline 32, proline 41, proline 44, and proline 47 each carry 4-hydroxyproline. Residues 34-53 are compositionally biased toward low complexity; the sequence is PZGFZGPPGZPGZPGSSGPM.

This sequence belongs to the fibrillar collagen family. In terms of assembly, trimers of one alpha 2(I) and two alpha 1(I) chains. Interacts with MRC2. Interacts with TRAM2. Interacts with MFAP4 in a Ca (2+)-dependent manner. In terms of processing, contains mostly 4-hydroxyproline. Proline residues at the third position of the tripeptide repeating unit (G-X-Y) are hydroxylated in some or all of the chains. Post-translationally, contains 3-hydroxyproline at a few sites. This modification occurs on the first proline residue in the sequence motif Gly-Pro-Hyp, where Hyp is 4-hydroxyproline. Lysine residues at the third position of the tripeptide repeating unit (G-X-Y) are 5-hydroxylated in some or all of the chains. In terms of processing, O-glycosylated on hydroxylated lysine residues. The O-linked glycan consists of a Glc-Gal disaccharide. As to expression, forms the fibrils of tendon, ligaments and bones. In bones the fibrils are mineralized with calcium hydroxyapatite.

Its subcellular location is the secreted. It localises to the extracellular space. The protein resides in the extracellular matrix. In terms of biological role, type I collagen is a member of group I collagen (fibrillar forming collagen). The chain is Collagen alpha-1(I) chain (COL1A1) from Oryctolagus cuniculus (Rabbit).